A 265-amino-acid chain; its full sequence is MKNNKKISSIRIATTGANGKMGKQITRTAINISKIIHTSSLVRHKSSFKNYDIGKLANIFPIGVFTNDNIKDISDKFDVLIDFTSVKSSLEYLNFCYKNKKKMVIGTTGFNAMQNKLIKHMSKKIAIFYSENFSFGANIIFRLLKNISSIGNIKNIDIDIIECHHKEKSDIPSATSILIKKNILKNLKIKKNIKISSIRSGNIIGEHKIIFSFLGEKIEITHQAYNRKIFALGAIKAAIWLSNKKTGLFNMSHILNKQAKNFKSN.

16–21 is a binding site for NAD(+); sequence GANGKM. R43 contacts NADP(+). Residues 106-108 and 130-133 each bind NAD(+); these read GTT and SENF. The Proton donor/acceptor role is filled by H164. H165 serves as a coordination point for (S)-2,3,4,5-tetrahydrodipicolinate. Residue K168 is the Proton donor of the active site. 174-175 contacts (S)-2,3,4,5-tetrahydrodipicolinate; sequence AT.

It belongs to the DapB family. In terms of assembly, homotetramer.

The protein localises to the cytoplasm. The enzyme catalyses (S)-2,3,4,5-tetrahydrodipicolinate + NAD(+) + H2O = (2S,4S)-4-hydroxy-2,3,4,5-tetrahydrodipicolinate + NADH + H(+). It carries out the reaction (S)-2,3,4,5-tetrahydrodipicolinate + NADP(+) + H2O = (2S,4S)-4-hydroxy-2,3,4,5-tetrahydrodipicolinate + NADPH + H(+). Its pathway is amino-acid biosynthesis; L-lysine biosynthesis via DAP pathway; (S)-tetrahydrodipicolinate from L-aspartate: step 4/4. Its function is as follows. Catalyzes the conversion of 4-hydroxy-tetrahydrodipicolinate (HTPA) to tetrahydrodipicolinate. This Wigglesworthia glossinidia brevipalpis protein is 4-hydroxy-tetrahydrodipicolinate reductase.